Reading from the N-terminus, the 1300-residue chain is Phospholipid-transporting ATPase IK (1300 aa).

A compositionally biased stretch (polar residues) spans 1–11 (MGTGPAQTPRS). Positions 1–98 (MGTGPAQTPR…SLGQREDLQD (98 aa)) are disordered. Topologically, residues 1–149 (MGTGPAQTPR…TAKYNFYSFL (149 aa)) are cytoplasmic. Residues 65-74 (RRHKAQPGRA) show a composition bias toward basic residues. The helical transmembrane segment at 150–171 (PLNLYEQFHRVSNLFFLIIIIL) threads the bilayer. Residues 172 to 177 (QSIPDI) are Exoplasmic loop-facing. Residues 178–197 (STLPWFSLSTPMVCLLFIRA) form a helical membrane-spanning segment. The Cytoplasmic segment spans residues 198-381 (TRDLVDDMGR…TKLDLLMNKL (184 aa)). The helical transmembrane segment at 382–403 (VVVIFISVVLVCLVLAFGFGFS) threads the bilayer. Over 404-430 (VKEFKDHHYYLSGVHGSSVAAESFFVF) the chain is Exoplasmic loop. The helical transmembrane segment at 431-452 (WSFLILLSVTIPMSMFILSEFI) threads the bilayer. Topologically, residues 453 to 995 (YLGNSVFIDW…GRWSYVRICK (543 aa)) are cytoplasmic. Aspartate 495 acts as the 4-aspartylphosphate intermediate in catalysis. ATP-binding residues include aspartate 495, lysine 496, threonine 497, glutamate 596, phenylalanine 637, lysine 660, arginine 693, threonine 763, glycine 764, aspartate 765, arginine 913, and lysine 919. Aspartate 495 contributes to the Mg(2+) binding site. A Mg(2+)-binding site is contributed by threonine 497. Residue aspartate 939 participates in Mg(2+) binding. The ATP site is built by asparagine 942 and aspartate 943. Residue aspartate 943 coordinates Mg(2+). Residues 996–1016 (FLRYFFYKSMASMMVQVWFAC) form a helical membrane-spanning segment. The Exoplasmic loop segment spans residues 1017-1028 (YNGFTGQPLYEG). Residues 1029-1048 (WFLALFNLLYSTLPVLYIGL) form a helical membrane-spanning segment. The Cytoplasmic portion of the chain corresponds to 1049 to 1078 (FEQDVSAEQSLEKPELYVVGQKDELFNYWV). A helical membrane pass occupies residues 1079-1100 (FVQAIAHGVTTSLVNFFMTLWI). The Exoplasmic loop portion of the chain corresponds to 1101–1112 (SRDTAGPASFSD). A helical transmembrane segment spans residues 1113–1135 (HQSFAVVVALSCLLSITMEVILI). At 1136-1141 (IKYWTA) the chain is on the cytoplasmic side. Residues 1142–1162 (LCVATILLSLGFYAIMTTTTQ) form a helical membrane-spanning segment. Over 1163-1182 (SFWLFRVSPTTFPFLYADLS) the chain is Exoplasmic loop. A helical membrane pass occupies residues 1183–1207 (VMSSPSILLVVLLSVSINTFPVLAL). The Cytoplasmic portion of the chain corresponds to 1208-1300 (RVIFPALKEL…EAASSPKESQ (93 aa)). Residues 1272–1300 (RGPGVSSDIASESLDPSDEEAASSPKESQ) form a disordered region.

It belongs to the cation transport ATPase (P-type) (TC 3.A.3) family. Type IV subfamily. It depends on Mg(2+) as a cofactor. Isoform 3 was only detected in testis.

The protein localises to the cytoplasmic vesicle. Its subcellular location is the secretory vesicle. It localises to the acrosome membrane. It is found in the endoplasmic reticulum membrane. It catalyses the reaction ATP + H2O + phospholipidSide 1 = ADP + phosphate + phospholipidSide 2.. It carries out the reaction a 1,2-diacyl-sn-glycero-3-phospho-L-serine(out) + ATP + H2O = a 1,2-diacyl-sn-glycero-3-phospho-L-serine(in) + ADP + phosphate + H(+). In terms of biological role, P4-ATPase flippase which catalyzes the hydrolysis of ATP coupled to the transport of aminophospholipids from the outer to the inner leaflet of various membranes and ensures the maintenance of asymmetric distribution of phospholipids. Phospholipid translocation also seems to be implicated in vesicle formation and in uptake of lipid signaling molecules. May be responsible for the maintenance of asymmetric distribution of phosphatidylserine (PS) in spermatozoa membranes. Involved in acrosome reactions and binding of spermatozoa to zona pellucida. This Homo sapiens (Human) protein is Phospholipid-transporting ATPase IK.